Here is a 437-residue protein sequence, read N- to C-terminus: NADH-ubiquinone oxidoreductase chain 4 (437 aa).

A run of 13 helical transmembrane segments spans residues 8-28 (GASI…AFII), 50-70 (LTPI…LVLI), 78-98 (YKYI…FCVC), 100-120 (FLTF…LILL), 132-152 (FYLM…LLYL), 177-197 (LVGL…HLWL), 212-232 (LAGV…NFII), 239-259 (VISV…IICI), 266-286 (ALVA…ILMM), 297-317 (TMIA…LSYL), 324-344 (LMFM…WFLF), 361-381 (LLII…MCII), and 417-437 (HVLT…LFSV).

Belongs to the complex I subunit 4 family.

It localises to the mitochondrion membrane. It catalyses the reaction a ubiquinone + NADH + 5 H(+)(in) = a ubiquinol + NAD(+) + 4 H(+)(out). Core subunit of the mitochondrial membrane respiratory chain NADH dehydrogenase (Complex I) that is believed to belong to the minimal assembly required for catalysis. Complex I functions in the transfer of electrons from NADH to the respiratory chain. The immediate electron acceptor for the enzyme is believed to be ubiquinone. The sequence is that of NADH-ubiquinone oxidoreductase chain 4 (ND4) from Albinaria caerulea (Land snail).